The chain runs to 430 residues: Asparagine--tRNA ligase (430 aa).

It belongs to the class-II aminoacyl-tRNA synthetase family. In terms of assembly, homodimer.

Its subcellular location is the cytoplasm. The enzyme catalyses tRNA(Asn) + L-asparagine + ATP = L-asparaginyl-tRNA(Asn) + AMP + diphosphate + H(+). The protein is Asparagine--tRNA ligase of Staphylococcus aureus (strain MSSA476).